Consider the following 467-residue polypeptide: Ammonium transporter Rh type C (467 aa).

Topologically, residues 1–9 (MAWNTNLRW) are cytoplasmic. Residues 10–30 (RLPLLCLVLEVAMVVLFGLFV) traverse the membrane as a helical segment. At 31-61 (RYSPDADSSWSNEKRKGNITSDLENEFYYRY) the chain is on the extracellular side. N-linked (GlcNAc...) asparagine glycosylation occurs at Asn-48. The helical transmembrane segment at 62–82 (PSFQDVHVMVFLGFGFLMTFL) threads the bilayer. The Cytoplasmic portion of the chain corresponds to 83–86 (QRYG). Residues 87–107 (YCALGFNFLLAALGVQWALLM) traverse the membrane as a helical segment. At 108-131 (QGWFQYTKDRLILLGIKNLIDADS) the chain is on the extracellular side. 2 consecutive transmembrane segments (helical) span residues 132–152 (CVASVCVAFGAVLGKVSPVQM) and 153–173 (LLMTFFQVALFSANEFLLLHV). Topologically, residues 174-179 (LEVKDA) are extracellular. Residues 180–200 (GGSITIHIFGAYFGLTVTWIL) form a helical membrane-spanning segment. Residues 201–219 (YRHNLDHSRERQSSVYHSN) are Cytoplasmic-facing. Residues 220–240 (LFAMIGTLFLWIYWPSFNSAM) traverse the membrane as a helical segment. The Extracellular portion of the chain corresponds to 241 to 251 (SNYGDAQHRAA). Residues 252–272 (INTYCSLAASVLTSVAMSSVL) traverse the membrane as a helical segment. Over 273–282 (HKKGKLDMVH) the chain is Cytoplasmic. The helical transmembrane segment at 283–303 (IQNATLAGGVGVGTAAEMMLM) threads the bilayer. Position 304 (Pro-304) is a topological domain, extracellular. A helical membrane pass occupies residues 305 to 325 (YGALIVGFICGAVSTLGFVYL). Topologically, residues 326–343 (TPFLESRLRIQDTCGIHN) are cytoplasmic. The helical transmembrane segment at 344–364 (LHGIPGLIGAIVGAVTAAYAS) threads the bilayer. Over 365-391 (PDGDRGFVYPFGFHNEKDEKVQGRFQA) the chain is Extracellular. A helical transmembrane segment spans residues 392–412 (FGLLLTLAIAMVGGTIMGLIL). The Cytoplasmic segment spans residues 413-467 (KLPFWGQAMDEDCFDDSIYWEMHEEKSSSPEDHTHKPSVPTEPVEQPTSSATLAP). The span at 436–447 (EEKSSSPEDHTH) shows a compositional bias: basic and acidic residues. A disordered region spans residues 436 to 467 (EEKSSSPEDHTHKPSVPTEPVEQPTSSATLAP). The segment covering 458–467 (QPTSSATLAP) has biased composition (polar residues).

This sequence belongs to the ammonium transporter (TC 2.A.49) family. Rh subfamily. As to quaternary structure, homotrimer. In terms of processing, N-glycosylated.

The protein localises to the cell membrane. It is found in the apical cell membrane. It catalyses the reaction NH4(+)(in) = NH4(+)(out). The enzyme catalyses methylamine(out) = methylamine(in). The catalysed reaction is CO2(out) = CO2(in). Its function is as follows. Ammonium transporter involved in the maintenance of acid-base homeostasis. Transports ammonium and its related derivative methylammonium across the plasma membrane of epithelial cells likely contributing to renal transepithelial ammonia transport and ammonia metabolism. Postulated to primarily mediate an electroneutral bidirectional transport of NH3 ammonia species according to a mechanism that implies interaction of an NH4(+) ion with acidic residues of the pore entry followed by dissociation of NH4(+) into NH3 and H(+). As a result NH3 transits through the central pore and is protonated on the extracellular side reforming NH4(+). May act as a CO2 channel providing for renal acid secretion. The protein is Ammonium transporter Rh type C (RHCG) of Oryctolagus cuniculus (Rabbit).